The sequence spans 455 residues: Argininosuccinate lyase (455 aa).

It belongs to the lyase 1 family. Argininosuccinate lyase subfamily.

Its subcellular location is the cytoplasm. It carries out the reaction 2-(N(omega)-L-arginino)succinate = fumarate + L-arginine. The protein operates within amino-acid biosynthesis; L-arginine biosynthesis; L-arginine from L-ornithine and carbamoyl phosphate: step 3/3. The protein is Argininosuccinate lyase of Shewanella halifaxensis (strain HAW-EB4).